Consider the following 199-residue polypeptide: N-(5'-phosphoribosyl)anthranilate isomerase (199 aa).

This sequence belongs to the TrpF family.

The enzyme catalyses N-(5-phospho-beta-D-ribosyl)anthranilate = 1-(2-carboxyphenylamino)-1-deoxy-D-ribulose 5-phosphate. It functions in the pathway amino-acid biosynthesis; L-tryptophan biosynthesis; L-tryptophan from chorismate: step 3/5. In Lacticaseibacillus paracasei (strain ATCC 334 / BCRC 17002 / CCUG 31169 / CIP 107868 / KCTC 3260 / NRRL B-441) (Lactobacillus paracasei), this protein is N-(5'-phosphoribosyl)anthranilate isomerase.